The chain runs to 104 residues: Protein RnfH (104 aa).

Positions 80–104 (PLTADPKLNRKRRAKEKASAGKASN) are disordered.

It belongs to the UPF0125 (RnfH) family.

This is Protein RnfH from Alcanivorax borkumensis (strain ATCC 700651 / DSM 11573 / NCIMB 13689 / SK2).